Here is a 101-residue protein sequence, read N- to C-terminus: MNKSKRPFTKSKRSFRRRLPPIQSGDRIDYRNMSLISRFISEQGKILSRRVNRVTLKQQRLITIAIKQARILSLLPFLNNQKQFERSESTPRTTSLRTRKK.

Over residues Met1–Leu19 the composition is skewed to basic residues. Residues Met1–Gln23 form a disordered region.

It belongs to the bacterial ribosomal protein bS18 family. In terms of assembly, part of the 30S ribosomal subunit.

Its subcellular location is the plastid. The protein resides in the chloroplast. This chain is Small ribosomal subunit protein bS18c, found in Draba nemorosa (Woodland whitlowgrass).